The following is a 270-amino-acid chain: 4-hydroxy-tetrahydrodipicolinate reductase (270 aa).

Residues 9 to 14 (GAGGRM) and glutamate 35 each bind NAD(+). Arginine 36 provides a ligand contact to NADP(+). NAD(+)-binding positions include 99 to 101 (GTT) and 123 to 126 (ASNF). The active-site Proton donor/acceptor is histidine 156. Histidine 157 serves as a coordination point for (S)-2,3,4,5-tetrahydrodipicolinate. The active-site Proton donor is lysine 160. A (S)-2,3,4,5-tetrahydrodipicolinate-binding site is contributed by 166 to 167 (GT).

The protein belongs to the DapB family.

It is found in the cytoplasm. It carries out the reaction (S)-2,3,4,5-tetrahydrodipicolinate + NAD(+) + H2O = (2S,4S)-4-hydroxy-2,3,4,5-tetrahydrodipicolinate + NADH + H(+). It catalyses the reaction (S)-2,3,4,5-tetrahydrodipicolinate + NADP(+) + H2O = (2S,4S)-4-hydroxy-2,3,4,5-tetrahydrodipicolinate + NADPH + H(+). The protein operates within amino-acid biosynthesis; L-lysine biosynthesis via DAP pathway; (S)-tetrahydrodipicolinate from L-aspartate: step 4/4. Its function is as follows. Catalyzes the conversion of 4-hydroxy-tetrahydrodipicolinate (HTPA) to tetrahydrodipicolinate. This Haemophilus influenzae (strain PittGG) protein is 4-hydroxy-tetrahydrodipicolinate reductase.